The primary structure comprises 934 residues: Protocadherin gamma-C3 (934 aa).

Positions 1–31 (MVPEAWRSGLVSTGRVVGVLLLLGALNKAST) are cleaved as a signal peptide. 6 Cadherin domains span residues 32-135 (VIHY…NPAF), 136-244 (PTQE…APVF), 245-352 (NQSL…APEI), 353-457 (TVTS…PPQS), 458-567 (SQSS…APQV), and 572-685 (PGGS…APRE). The Extracellular segment spans residues 32 to 693 (VIHYEIPEER…REQKKNLTFY (662 aa)). N245, N424, N478, N550, N615, and N689 each carry an N-linked (GlcNAc...) asparagine glycan. Residues 694 to 714 (LLLSLILVSVGFVVTVFGVII) form a helical membrane-spanning segment. Residues 715 to 934 (FKVYKWKQSR…KKKSGKKEKK (220 aa)) are Cytoplasmic-facing. Disordered stretches follow at residues 804–843 (ESAP…WPNN) and 904–934 (ATLT…KEKK). Positions 812 to 843 (APPNTDWRFSQAQRPGTSGSQNGDDTGTWPNN) are enriched in polar residues. The segment covering 924–934 (NKKKSGKKEKK) has biased composition (basic residues).

Its subcellular location is the cell membrane. In terms of biological role, potential calcium-dependent cell-adhesion protein. May be involved in the establishment and maintenance of specific neuronal connections in the brain. This is Protocadherin gamma-C3 (PCDHGC3) from Homo sapiens (Human).